Reading from the N-terminus, the 198-residue chain is Basic helix-loop-helix transcription factor amos (198 aa).

Residues 76–131 (EQQQHHLQANPLGKNQGRSPRYWNKQQRSKPYDKLSTSMSSSTSSASSSSSSSAGF) form a disordered region. Positions 111–129 (STSMSSSTSSASSSSSSSA) are enriched in low complexity. One can recognise a bHLH domain in the interval 138-190 (KRRLAANARERRRMNSLNDAFDKLRDVVPSLGHDRRLSKYETLQMAQAYIGDL).

As to quaternary structure, efficient DNA binding requires dimerization with another bHLH protein. Interacts with Daughterless (da). As to expression, during embryonic development, expression is seen in a small cluster of ectodermal cells during stage 10 which becomes restricted to 1 cell by stage 11. Expression is lost from this cell in the thorax and then the abdomen. Later expression is restricted to sensory organ precursors. Very transient expression was detected in distal leg disks at approximately 0-4 hours after puparium formation (APF), correlating with the anlage of the innervated tarsal claw.

The protein localises to the nucleus. In terms of biological role, transcription factor involved in early neurogenesis; sensillum basiconica formation and maybe sensillum trichodea development. Promotes multiple dendritic (MD) neuron formation. Required for olfactory sensilla; regulated by lozenge (lz). This chain is Basic helix-loop-helix transcription factor amos (amos), found in Drosophila melanogaster (Fruit fly).